A 1277-amino-acid polypeptide reads, in one-letter code: Neural cell adhesion molecule L1 (1277 aa).

The first 34 residues, 1–34 (MAHTQRQQGGSRGQWSRCLLLLLLLPLAAQPGRA), serve as a signal peptide directing secretion. The Extracellular segment spans residues 35–1135 (AIQIPSSYYI…VQPSFATQGW (1101 aa)). Ig-like C2-type domains lie at 51-140 (PAIT…TAVS), 150-241 (PPVQ…EPIT), 256-344 (PQMM…YTVT), 349-437 (PYWT…TNVY), and 443-528 (PQIL…AEVE). 5 disulfide bridges follow: C72/C129, C173/C224, C280/C328, C370/C421, and C465/C514. N317 is a glycosylation site (N-linked (GlcNAc...) asparagine). Residues N503, N520, and N531 are each glycosylated (N-linked (GlcNAc...) asparagine). Positions 532 to 623 (RTVILSPPQA…DMVEASSTLT (92 aa)) constitute an Ig-like C2-type 6 domain. C554 and C607 are oxidised to a cystine. 5 consecutive Fibronectin type-III domains span residues 630-725 (PPVH…TPAD), 730-824 (NPED…SGED), 829-931 (APLN…TPEG), 935-1030 (PPMS…TLEG), and 1032-1129 (PPAN…VQPS). Residues 714–740 (SKLSDLYKTPADAPDSNPEDVRSESTD) are disordered. N-linked (GlcNAc...) asparagine glycans are attached at residues N794 and N839. 5 N-linked (GlcNAc...) asparagine glycosylation sites follow: N1035, N1046, N1068, N1083, and N1108. Residues 1136-1156 (FIGVVSAVVLLLLVLLILCFI) form a helical membrane-spanning segment. Over 1157–1277 (KRSKGGKYSV…ATNGAPSFLN (121 aa)) the chain is Cytoplasmic. Disordered regions lie at residues 1163–1216 (KYSV…LCSE) and 1232–1277 (NMDE…SFLN). Over residues 1165–1201 (SVKDKEDGPMDSEARPMKDETFGEYRSLESDLEEKRT) the composition is skewed to basic and acidic residues. A compositionally biased stretch (polar residues) spans 1232–1242 (NMDESLASQFS). Over residues 1255–1277 (PDNSPLNPAANPPATNGAPSFLN) the composition is skewed to low complexity.

The protein belongs to the immunoglobulin superfamily. L1/neurofascin/NgCAM family.

The protein localises to the cell membrane. Its subcellular location is the cell projection. The protein resides in the growth cone. In terms of biological role, neural cell adhesion molecule involved in the dynamics of cell adhesion and in the generation of transmembrane signals at tyrosine kinase receptors. During brain development, critical in multiple processes, including neuronal migration, axonal growth and fasciculation, and synaptogenesis. In the mature brain, plays a role in the dynamics of neuronal structure and function, including synaptic plasticity. In Takifugu rubripes (Japanese pufferfish), this protein is Neural cell adhesion molecule L1 (l1cam).